Consider the following 248-residue polypeptide: DNA repair protein RecO (248 aa).

This sequence belongs to the RecO family.

Functionally, involved in DNA repair and RecF pathway recombination. This Thermoanaerobacter sp. (strain X514) protein is DNA repair protein RecO.